Here is a 441-residue protein sequence, read N- to C-terminus: MGLSNDRIKFNVGGRIFETTATTLANAGRDSFFGALFDENWNLSQPGDLFIDRNPDCFAVLLDLLRTGDLNIPPNIPERLLHKEAMFYGLIDHLRTAKWGPFDGNRLHLSRSVTGIAPGDGTAIRAGPDGGCCIAHGSVVHVFDWMLEEHPTINLDYQRVNDVGWIDSGNIVLSACERLGRGDGGMGLFSSSSGELRYKFQVSHDNQVKSYSAGALSFSPDSKIFTSCKGRSNEYGIGVWDQSTGKQVDFFYESPGWSLGDADKLQWLSGKNCLLVATLFPRKDNCYISLLDFREKNMVWSWSDIGFLTMAEEKRVRDAIAMEESNSICVVNEFEDLGFIDLRMDGGGSSVRWSSRSRLMKSKMPDEPCYPKLALHEGQLFSSMNDSISVFCGSDWVLTSRLKRSYGGSICDFSIGGDRLFALHSEENVFDVWETLPPPII.

The region spanning 6-74 is the BTB domain; sequence DRIKFNVGGR…LRTGDLNIPP (69 aa).

Its pathway is protein modification; protein ubiquitination. In terms of biological role, may act as a substrate-specific adapter of an E3 ubiquitin-protein ligase complex (CUL3-RBX1-BTB) which mediates the ubiquitination and subsequent proteasomal degradation of target proteins. This is BTB/POZ domain-containing protein At4g30940 from Arabidopsis thaliana (Mouse-ear cress).